The chain runs to 350 residues: Sulfate/thiosulfate import ATP-binding protein cysA (350 aa).

One can recognise an ABC transporter domain in the interval 3–237; it reads IEVRNLSKRF…PATPFVYGFL (235 aa). 35-42 contacts ATP; the sequence is GPSGCGKT.

It belongs to the ABC transporter superfamily. Sulfate/tungstate importer (TC 3.A.1.6) family.

It is found in the mitochondrion. The catalysed reaction is sulfate(out) + ATP + H2O = sulfate(in) + ADP + phosphate + H(+). The enzyme catalyses thiosulfate(out) + ATP + H2O = thiosulfate(in) + ADP + phosphate + H(+). Functionally, part of the ABC transporter complex involved in sulfate/thiosulfate import. Responsible for energy coupling to the transport system. This Cucumis sativus (Cucumber) protein is Sulfate/thiosulfate import ATP-binding protein cysA (CYSA).